The sequence spans 464 residues: Soluble pyridine nucleotide transhydrogenase (464 aa).

An FAD-binding site is contributed by 35 to 44; it reads DSRRVVGGNC.

The protein belongs to the class-I pyridine nucleotide-disulfide oxidoreductase family. FAD is required as a cofactor.

It is found in the cytoplasm. The catalysed reaction is NAD(+) + NADPH = NADH + NADP(+). Functionally, conversion of NADPH, generated by peripheral catabolic pathways, to NADH, which can enter the respiratory chain for energy generation. This chain is Soluble pyridine nucleotide transhydrogenase, found in Pseudomonas aeruginosa (strain LESB58).